Reading from the N-terminus, the 358-residue chain is Magnesium-protoporphyrin IX monomethyl ester [oxidative] cyclase (358 aa).

Belongs to the AcsF family. The cofactor is Fe cation.

The enzyme catalyses Mg-protoporphyrin IX 13-monomethyl ester + 3 NADPH + 3 O2 + 2 H(+) = 3,8-divinyl protochlorophyllide a + 3 NADP(+) + 5 H2O. It functions in the pathway porphyrin-containing compound metabolism; chlorophyll biosynthesis (light-independent). Functionally, catalyzes the formation of the isocyclic ring in chlorophyll biosynthesis. Mediates the cyclase reaction, which results in the formation of divinylprotochlorophyllide (Pchlide) characteristic of all chlorophylls from magnesium-protoporphyrin IX 13-monomethyl ester (MgPMME). This is Magnesium-protoporphyrin IX monomethyl ester [oxidative] cyclase from Trichodesmium erythraeum (strain IMS101).